The chain runs to 306 residues: Pantothenate kinase (306 aa).

91–98 is an ATP binding site; it reads GSVAVGKS.

The protein belongs to the prokaryotic pantothenate kinase family.

The protein localises to the cytoplasm. The catalysed reaction is (R)-pantothenate + ATP = (R)-4'-phosphopantothenate + ADP + H(+). It functions in the pathway cofactor biosynthesis; coenzyme A biosynthesis; CoA from (R)-pantothenate: step 1/5. The protein is Pantothenate kinase of Streptococcus pneumoniae (strain JJA).